The following is a 66-amino-acid chain: Conotoxin Ca5.2 (66 aa).

Residues 1-22 form the signal peptide; it reads MRCVPVFLILLGLIASAPSVDA. Positions 23-48 are excised as a propeptide; it reads RPQTKDDALASFHDSAKRHLQRLVNA. At F62 the chain carries Phenylalanine amide.

This sequence belongs to the conotoxin T superfamily. Contains 2 disulfide bonds that can be either 'C1-C3, C2-C4' or 'C1-C4, C2-C3', since these disulfide connectivities have been observed for conotoxins with cysteine framework V (for examples, see AC P0DQQ7 and AC P81755). As to expression, expressed by the venom duct.

Its subcellular location is the secreted. This is Conotoxin Ca5.2 from Conus caracteristicus (Characteristic cone).